We begin with the raw amino-acid sequence, 730 residues long: Elongation factor 2 (730 aa).

In terms of domain architecture, tr-type G spans 19 to 260 (DRIRNIGIVA…MVVKHLPNPL (242 aa)). Residues 28–35 (AHIDHGKT), 94–98 (DTPGH), and 148–151 (NKVD) each bind GTP. H597 carries the post-translational modification Diphthamide.

Belongs to the TRAFAC class translation factor GTPase superfamily. Classic translation factor GTPase family. EF-G/EF-2 subfamily.

The protein resides in the cytoplasm. Functionally, catalyzes the GTP-dependent ribosomal translocation step during translation elongation. During this step, the ribosome changes from the pre-translocational (PRE) to the post-translocational (POST) state as the newly formed A-site-bound peptidyl-tRNA and P-site-bound deacylated tRNA move to the P and E sites, respectively. Catalyzes the coordinated movement of the two tRNA molecules, the mRNA and conformational changes in the ribosome. This is Elongation factor 2 from Methanoculleus marisnigri (strain ATCC 35101 / DSM 1498 / JR1).